Consider the following 514-residue polypeptide: Maturase K (514 aa).

Belongs to the intron maturase 2 family. MatK subfamily.

It localises to the plastid. The protein resides in the chloroplast. Usually encoded in the trnK tRNA gene intron. Probably assists in splicing its own and other chloroplast group II introns. In Tsuga canadensis (Eastern hemlock), this protein is Maturase K.